Reading from the N-terminus, the 264-residue chain is Type II iodothyronine deiodinase (264 aa).

Over 1–7 (MGLLSVD) the chain is Lumenal. Residues 8–28 (LLITLQILPGFFSNCLFLALY) form a helical; Signal-anchor for type III membrane protein membrane-spanning segment. The Cytoplasmic portion of the chain corresponds to 29–264 (DSVVLVKHVL…AESGQTGTEK (236 aa)). The active site involves selenocysteine 124. Selenocysteine 124 is a non-standard amino acid (selenocysteine).

Belongs to the iodothyronine deiodinase family. As to quaternary structure, predominantly monomer. Can form homodimers but homodimerization is not essential for enzyme activity. As to expression, high levels seen in the metamorphosing tail.

The protein localises to the endoplasmic reticulum membrane. It carries out the reaction 3,3',5-triiodo-L-thyronine + iodide + A + H(+) = L-thyroxine + AH2. It catalyses the reaction 3,3'-diiodo-L-thyronine + iodide + A + H(+) = 3,3',5'-triiodo-L-thyronine + AH2. The catalysed reaction is 3'-iodo-L-thyronine + iodide + A + H(+) = 3',5'-diiodo-L-thyronine + AH2. The enzyme catalyses 3,3'-diiodothyronamine + iodide + A + H(+) = 3,3',5'-triiodothyronamine + AH2. It carries out the reaction 3'-iodothyronamine + iodide + A + H(+) = 3',5'-diiodothyronamine + AH2. With respect to regulation, not inhibited by N(6)-propylthiouracil. Plays a crucial role in the metabolism of thyroid hormones (TH) and has specific roles in TH activation and inactivation by deiodination. Catalyzes the deiodination of L-thyroxine (T4) to 3,5,3'-triiodothyronine (T3) and 3',5'-diiodothyronine (3',5'-T2) to 3'-monoiodothyronine (3'-T1) via outer-ring deiodination (ORD). Catalyzes the deiodination of 3,3',5'-triiodothyronine (rT3) to 3,3'-diiodothyronine (3,3'-T2) via ORD. Catalyzes the phenolic ring deiodinations of 3,3',5'-triiodothyronamine and 3',5'- diiodothyronamine. This chain is Type II iodothyronine deiodinase (dio2), found in Aquarana catesbeiana (American bullfrog).